Consider the following 1070-residue polypeptide: MLRDGNEGMSTIPGFSQIQFEGFCRFIDQGLTEELHKFPKIEDTDQEIEFQLFVETYQLVEPLIKERDAVYESLTYSSELYVPAGLIWKTGRDMQEQTVFIGNIPLMNSLGTSIVNGIYRIVINQILQSPGIYYRSELDHNGISVYTGTIISDWGGRSELEIDRKARIWARVSRKQKISILVLSSAMGSNLREILDNVCYPEIFLSFPNDKEKKKIGSRENAILEFYQQFACVGGDPVFSESLCKELQKKFFQQRCELGRIGRRNMNRRLNLDIPQNNTFLLPRDVLAAADHLIGMKFGMGTLDDMNHLKNKRIRSVADLLQDQFGLALVRLENAVRGTICGAIRHKLIPTPQNLVTSTPLTTTYESFFGLHPLSQVLDRTNPLTQIVHGRKSSYLGPGGLTGRTASFRIRDIHPSHYGRICPIDTSEGINVGLIGSLAIHARIGHWGSIESPFYEISERSKEVQMVYLSPSRDEYYMVAAGNSLALNWGIQEEQVVPARYRQEFLTIAWEQIHLRSIFPFQYFSIGASLIPFIEHNDANRALMSSNMQRQAVPLSRSEKCIVGTGLECQAALDSGVSAIAEHEGKIVYTDTDKIVLSGNGDTISIPLVMYQRSNKNTCMHQKPQVRRGKCIKKGQILADGAATVGGELALGKNVLVAYMPWEGYNSEDAVLISERLVYGDIYTSFHIRKYEIQTHVTSQGPERITNEIPHLEAHLLRNLDKNGIVMLGSWIETGDILVGKLTPQTAKESSYAPEDRLLRAILGIQVSTAKETCLKLPIGGRGRVIDVRWIQKKGGSSYNPEMIRVYISQKREIKVGDKVAGRHGNKGIISKILPRQDMPYLQDGTPVDMVFNPLGVPSRMNVGQIFECSLGLAGDLLDRHYRIAPFDERYEQEASRKLVFSELYSASKQTANPWVFEPECPGKSRIFDGRTGDPFEQPVIIGKSYILKLIHQVDDKIHGRSSGHYALVTQQPLRGRAKQGGQRVGEMEVWALEGFGVAHISQEMLTYKSDHIRARQEVLGTTIIGGTIPNPEDAPESFRLLVRELRSLALELNHFLVSEKNFQINRKEA.

This sequence belongs to the RNA polymerase beta chain family. In terms of assembly, in plastids the minimal PEP RNA polymerase catalytic core is composed of four subunits: alpha, beta, beta', and beta''. When a (nuclear-encoded) sigma factor is associated with the core the holoenzyme is formed, which can initiate transcription.

Its subcellular location is the plastid. It is found in the chloroplast. The enzyme catalyses RNA(n) + a ribonucleoside 5'-triphosphate = RNA(n+1) + diphosphate. DNA-dependent RNA polymerase catalyzes the transcription of DNA into RNA using the four ribonucleoside triphosphates as substrates. This is DNA-directed RNA polymerase subunit beta from Liriodendron tulipifera (Tuliptree).